Here is a 290-residue protein sequence, read N- to C-terminus: Shikimate dehydrogenase (NADP(+)) (290 aa).

Residues 20–22 (SLS) and threonine 67 each bind shikimate. The active-site Proton acceptor is the lysine 71. Shikimate contacts are provided by asparagine 92 and aspartate 107. Residues 130–134 (GAGGA) and leucine 227 contribute to the NADP(+) site. Tyrosine 229 serves as a coordination point for shikimate. An NADP(+)-binding site is contributed by glycine 250.

It belongs to the shikimate dehydrogenase family. In terms of assembly, homodimer.

The enzyme catalyses shikimate + NADP(+) = 3-dehydroshikimate + NADPH + H(+). It participates in metabolic intermediate biosynthesis; chorismate biosynthesis; chorismate from D-erythrose 4-phosphate and phosphoenolpyruvate: step 4/7. Involved in the biosynthesis of the chorismate, which leads to the biosynthesis of aromatic amino acids. Catalyzes the reversible NADPH linked reduction of 3-dehydroshikimate (DHSA) to yield shikimate (SA). This Syntrophomonas wolfei subsp. wolfei (strain DSM 2245B / Goettingen) protein is Shikimate dehydrogenase (NADP(+)).